Consider the following 119-residue polypeptide: Protein GSKIP homolog (119 aa).

This sequence belongs to the GSKIP family.

This Drosophila melanogaster (Fruit fly) protein is Protein GSKIP homolog.